The sequence spans 270 residues: Putative phosphoenolpyruvate synthase regulatory protein (270 aa).

150–157 (GVSRCGKT) is an ADP binding site.

The protein belongs to the pyruvate, phosphate/water dikinase regulatory protein family. PSRP subfamily.

The catalysed reaction is [pyruvate, water dikinase] + ADP = [pyruvate, water dikinase]-phosphate + AMP + H(+). The enzyme catalyses [pyruvate, water dikinase]-phosphate + phosphate + H(+) = [pyruvate, water dikinase] + diphosphate. Its function is as follows. Bifunctional serine/threonine kinase and phosphorylase involved in the regulation of the phosphoenolpyruvate synthase (PEPS) by catalyzing its phosphorylation/dephosphorylation. This chain is Putative phosphoenolpyruvate synthase regulatory protein, found in Shewanella sediminis (strain HAW-EB3).